Here is a 633-residue protein sequence, read N- to C-terminus: Probable alkaline/neutral invertase A, chloroplastic (633 aa).

The transit peptide at 1–71 (MNAITFLGNS…TNAVPFCTDR (71 aa)) directs the protein to the chloroplast. Serine 623 carries the post-translational modification Phosphoserine.

It belongs to the glycosyl hydrolase 100 family. As to expression, expressed in flowers.

The protein localises to the plastid. It localises to the chloroplast. The catalysed reaction is Hydrolysis of terminal non-reducing beta-D-fructofuranoside residues in beta-D-fructofuranosides.. Functionally, chloroplastic invertase that cleaves sucrose into glucose and fructose and may participate in the carbon flux between the cytosol and plastids in leaves. The sequence is that of Probable alkaline/neutral invertase A, chloroplastic from Arabidopsis thaliana (Mouse-ear cress).